Reading from the N-terminus, the 502-residue chain is Probable cytochrome P450 28d1 (502 aa).

Cys446 is a binding site for heme.

It belongs to the cytochrome P450 family. Heme serves as cofactor.

It is found in the endoplasmic reticulum membrane. It localises to the microsome membrane. Its function is as follows. May be involved in the metabolism of insect hormones and in the breakdown of synthetic insecticides. The chain is Probable cytochrome P450 28d1 (Cyp28d1) from Drosophila melanogaster (Fruit fly).